Consider the following 464-residue polypeptide: Chromosomal replication initiator protein DnaA (464 aa).

Positions 1 to 74 (MDAVGYEVFW…ERKFLELSGH (74 aa)) are domain I, interacts with DnaA modulators. Residues 74-117 (HPIKLLFAVKKGTPHGNTAPPKHVHTYLEKNSPAEVPSKKSFHP) form a domain II region. Residues 118 to 341 (DLNRDYTFEN…GALTKIIAFI (224 aa)) form a domain III, AAA+ region region. Residues glycine 162, glycine 164, lysine 165, and threonine 166 each coordinate ATP. Residues 342–464 (EVSGSITIDI…LKSKVQDSIR (123 aa)) are domain IV, binds dsDNA.

Belongs to the DnaA family. In terms of assembly, oligomerizes as a right-handed, spiral filament on DNA at oriC.

It localises to the cytoplasm. In terms of biological role, plays an essential role in the initiation and regulation of chromosomal replication. ATP-DnaA binds to the origin of replication (oriC) to initiate formation of the DNA replication initiation complex once per cell cycle. Binds the DnaA box (a 9 base pair repeat at the origin) and separates the double-stranded (ds)DNA. Forms a right-handed helical filament on oriC DNA; dsDNA binds to the exterior of the filament while single-stranded (ss)DNA is stabiized in the filament's interior. The ATP-DnaA-oriC complex binds and stabilizes one strand of the AT-rich DNA unwinding element (DUE), permitting loading of DNA polymerase. After initiation quickly degrades to an ADP-DnaA complex that is not apt for DNA replication. Binds acidic phospholipids. The chain is Chromosomal replication initiator protein DnaA from Treponema pallidum (strain Nichols).